The following is an 861-amino-acid chain: DNA mismatch repair protein MutS (861 aa).

Position 616 to 623 (616 to 623) interacts with ATP; that stretch reads GPNMGGKS.

Belongs to the DNA mismatch repair MutS family.

This protein is involved in the repair of mismatches in DNA. It is possible that it carries out the mismatch recognition step. This protein has a weak ATPase activity. The sequence is that of DNA mismatch repair protein MutS from Haemophilus influenzae (strain 86-028NP).